The chain runs to 427 residues: Fc receptor-like B (427 aa).

An N-terminal signal peptide occupies residues Met-1–Ala-17. Ig-like C2-type domains lie at Pro-23 to Ser-101 and Asp-103 to Thr-189. 2 disulfides stabilise this stretch: Cys-44/Cys-85 and Cys-124/Cys-168. Asn-152 is a glycosylation site (N-linked (GlcNAc...) asparagine). A compositionally biased stretch (polar residues) spans Thr-401–Thr-418. Positions Thr-401–Ser-427 are disordered.

In terms of tissue distribution, expressed at low levels. Expressed in B-lymphocytes. Detected in spleen, lymph node, kidney, lung and brain.

The protein localises to the cytoplasm. Its subcellular location is the endoplasmic reticulum. In Mus musculus (Mouse), this protein is Fc receptor-like B (Fcrlb).